Here is a 42-residue protein sequence, read N- to C-terminus: Photosystem I reaction center subunit IX (42 aa).

Residues 7–27 (FLSTAPVLIMALLTFTAGLLI) traverse the membrane as a helical segment.

The protein belongs to the PsaJ family.

The protein resides in the cellular thylakoid membrane. In terms of biological role, may help in the organization of the PsaE and PsaF subunits. The polypeptide is Photosystem I reaction center subunit IX (Rippkaea orientalis (strain PCC 8801 / RF-1) (Cyanothece sp. (strain PCC 8801))).